The sequence spans 343 residues: 2,3,4,5-tetrahydropyridine-2,6-dicarboxylate N-succinyltransferase (343 aa).

Glu-204 contacts Mg(2+). The active-site Acyl-anhydride intermediate is Glu-220. Residues Arg-222, Gly-237, Ser-240, Ala-263, 278-279 (ES), Gly-286, Lys-303, and 316-319 (RRNS) contribute to the succinyl-CoA site.

Belongs to the type 2 tetrahydrodipicolinate N-succinyltransferase family. In terms of assembly, homotrimer.

The protein localises to the cytoplasm. It carries out the reaction (S)-2,3,4,5-tetrahydrodipicolinate + succinyl-CoA + H2O = (S)-2-succinylamino-6-oxoheptanedioate + CoA. Its pathway is amino-acid biosynthesis; L-lysine biosynthesis via DAP pathway; LL-2,6-diaminopimelate from (S)-tetrahydrodipicolinate (succinylase route): step 1/3. In terms of biological role, catalyzes the conversion of the cyclic tetrahydrodipicolinate (THDP) into the acyclic N-succinyl-L-2-amino-6-oxopimelate using succinyl-CoA. This chain is 2,3,4,5-tetrahydropyridine-2,6-dicarboxylate N-succinyltransferase, found in Vibrio cholerae serotype O1 (strain ATCC 39315 / El Tor Inaba N16961).